A 497-amino-acid chain; its full sequence is MORN repeat-containing protein 1 (497 aa).

The tract at residues Met1–Tyr27 is disordered. MORN repeat units lie at residues Tyr39–Tyr61, Tyr62–Asp84, Phe86–Cys108, Tyr109–Val131, Tyr132–Lys154, Tyr155–Thr177, and Tyr178–Thr200. Disordered stretches follow at residues Gly393 to Glu425 and Gln468 to Arg497.

This Homo sapiens (Human) protein is MORN repeat-containing protein 1 (MORN1).